The following is a 253-amino-acid chain: Vitamin B12 import ATP-binding protein BtuD (253 aa).

An ABC transporter domain is found at 4–236 (LQLSNVSVDT…NILSEVFEVD (233 aa)). 32-39 (GPNGAGKS) contributes to the ATP binding site.

Belongs to the ABC transporter superfamily. Vitamin B12 importer (TC 3.A.1.13.1) family. In terms of assembly, the complex is composed of two ATP-binding proteins (BtuD), two transmembrane proteins (BtuC) and a solute-binding protein (BtuF).

The protein resides in the cell inner membrane. It carries out the reaction an R-cob(III)alamin(out) + ATP + H2O = an R-cob(III)alamin(in) + ADP + phosphate + H(+). Functionally, part of the ABC transporter complex BtuCDF involved in vitamin B12 import. Responsible for energy coupling to the transport system. This Yersinia enterocolitica serotype O:8 / biotype 1B (strain NCTC 13174 / 8081) protein is Vitamin B12 import ATP-binding protein BtuD.